Reading from the N-terminus, the 228-residue chain is Ion-translocating oxidoreductase complex subunit E (228 aa).

A run of 5 helical transmembrane segments spans residues 18-38, 69-89, 92-112, 125-145, and 182-202; these read ALVQ…ATNA, IPIY…LINA, FGLY…CIVV, LLSA…MFVL, and PFLL…MLAV.

Belongs to the NqrDE/RnfAE family. As to quaternary structure, the complex is composed of six subunits: RnfA, RnfB, RnfC, RnfD, RnfE and RnfG.

Its subcellular location is the cell inner membrane. In terms of biological role, part of a membrane-bound complex that couples electron transfer with translocation of ions across the membrane. The chain is Ion-translocating oxidoreductase complex subunit E from Cronobacter sakazakii (strain ATCC BAA-894) (Enterobacter sakazakii).